The following is a 166-amino-acid chain: UPF0336 protein MT0525.1 (166 aa).

Residues 8–131 (QTLIGKHYRA…VLAEIRSEVT (124 aa)) form the MaoC-like domain.

It belongs to the UPF0336 family.

The polypeptide is UPF0336 protein MT0525.1 (Mycobacterium tuberculosis (strain CDC 1551 / Oshkosh)).